The chain runs to 294 residues: Acetyl-coenzyme A carboxylase carboxyl transferase subunit beta (294 aa).

The 265-residue stretch at 30–294 (IMTKCPECKK…PEVGGEADGE (265 aa)) folds into the CoA carboxyltransferase N-terminal domain. Zn(2+) is bound by residues C34, C37, C53, and C56. The C4-type zinc finger occupies 34-56 (CPECKKIMYTKELQKNLMVCNYC).

This sequence belongs to the AccD/PCCB family. As to quaternary structure, acetyl-CoA carboxylase is a heterohexamer composed of biotin carboxyl carrier protein (AccB), biotin carboxylase (AccC) and two subunits each of ACCase subunit alpha (AccA) and ACCase subunit beta (AccD). Zn(2+) serves as cofactor.

It is found in the cytoplasm. The enzyme catalyses N(6)-carboxybiotinyl-L-lysyl-[protein] + acetyl-CoA = N(6)-biotinyl-L-lysyl-[protein] + malonyl-CoA. It functions in the pathway lipid metabolism; malonyl-CoA biosynthesis; malonyl-CoA from acetyl-CoA: step 1/1. Functionally, component of the acetyl coenzyme A carboxylase (ACC) complex. Biotin carboxylase (BC) catalyzes the carboxylation of biotin on its carrier protein (BCCP) and then the CO(2) group is transferred by the transcarboxylase to acetyl-CoA to form malonyl-CoA. The polypeptide is Acetyl-coenzyme A carboxylase carboxyl transferase subunit beta (Listeria monocytogenes serotype 4b (strain F2365)).